A 148-amino-acid chain; its full sequence is MVDWTDAERSAIVGLWGKISVDEIGPQALARLLIVSPWTQRHFSTFGNLSTPAAIMGNPAVAKHGKTVMHGLDRAVQNLDDIKNTYAALSVMHSEKLHVDPDNFRLLADCITVCVAAKLGPAVFNADTQEAFQKFLAVVVSALGRQYH.

The region spanning 3–148 (DWTDAERSAI…VVSALGRQYH (146 aa)) is the Globin domain. Positions 64 and 93 each coordinate heme b.

It belongs to the globin family. In terms of assembly, heterotetramer of two alpha chains and two beta chains. In terms of tissue distribution, red blood cells.

Involved in oxygen transport from gills to the various peripheral tissues. In Oncorhynchus nerka (Sockeye salmon), this protein is Hemoglobin subunit beta (hbb).